The following is a 469-amino-acid chain: Neuraminidase (469 aa).

The Intravirion segment spans residues 1–9 (MNPNQKIIT). Residues 10-30 (IGSVSLTIATICFLMQIAILV) form a helical membrane-spanning segment. Residues 11–33 (GSVSLTIATICFLMQIAILVTTV) are involved in apical transport and lipid raft association. The Virion surface portion of the chain corresponds to 31–469 (TTVTLHFKQY…DGADINLMPI (439 aa)). The hypervariable stalk region stretch occupies residues 36–88 (HFKQYECDSPANKQVMPCEPIIIERNITEIVYLTNTTIEKEICPKLVEYRNWS). Residues Asn61, Asn70, and Asn86 are each glycosylated (N-linked (GlcNAc...) asparagine; by host). Residues 91–469 (QCKITGFAPF…DGADINLMPI (379 aa)) are head of neuraminidase. Disulfide bonds link Cys92–Cys417, Cys124–Cys129, Cys183–Cys230, Cys232–Cys237, Cys278–Cys291, Cys280–Cys289, Cys318–Cys337, and Cys421–Cys447. Arg118 provides a ligand contact to substrate. Residue Asn146 is glycosylated (N-linked (GlcNAc...) asparagine; by host). The active-site Proton donor/acceptor is Asp151. Residue Arg152 participates in substrate binding. Asn200 and Asn234 each carry an N-linked (GlcNAc...) asparagine; by host glycan. 276 to 277 (EE) lines the substrate pocket. Arg292 lines the substrate pocket. Ca(2+)-binding residues include Asp293, Gly297, and Asp324. Position 371 (Arg371) interacts with substrate. Asn402 is a glycosylation site (N-linked (GlcNAc...) asparagine; by host). The active-site Nucleophile is Tyr406.

Belongs to the glycosyl hydrolase 34 family. Homotetramer. The cofactor is Ca(2+). In terms of processing, N-glycosylated.

Its subcellular location is the virion membrane. The protein resides in the host apical cell membrane. The enzyme catalyses Hydrolysis of alpha-(2-&gt;3)-, alpha-(2-&gt;6)-, alpha-(2-&gt;8)- glycosidic linkages of terminal sialic acid residues in oligosaccharides, glycoproteins, glycolipids, colominic acid and synthetic substrates.. Inhibited by the neuraminidase inhibitors zanamivir (Relenza) and oseltamivir (Tamiflu). These drugs interfere with the release of progeny virus from infected cells and are effective against all influenza strains. Resistance to neuraminidase inhibitors is quite rare. In terms of biological role, catalyzes the removal of terminal sialic acid residues from viral and cellular glycoconjugates. Cleaves off the terminal sialic acids on the glycosylated HA during virus budding to facilitate virus release. Additionally helps virus spread through the circulation by further removing sialic acids from the cell surface. These cleavages prevent self-aggregation and ensure the efficient spread of the progeny virus from cell to cell. Otherwise, infection would be limited to one round of replication. Described as a receptor-destroying enzyme because it cleaves a terminal sialic acid from the cellular receptors. May facilitate viral invasion of the upper airways by cleaving the sialic acid moieties on the mucin of the airway epithelial cells. Likely to plays a role in the budding process through its association with lipid rafts during intracellular transport. May additionally display a raft-association independent effect on budding. Plays a role in the determination of host range restriction on replication and virulence. Sialidase activity in late endosome/lysosome traffic seems to enhance virus replication. This chain is Neuraminidase, found in Influenza A virus (strain A/Beijing/39/1975 H3N2).